Consider the following 371-residue polypeptide: tRNA-specific 2-thiouridylase MnmA (371 aa).

ATP is bound by residues 16 to 23 (GMSGGVDS) and M42. An interaction with target base in tRNA region spans residues 102–104 (NPD). Residue C107 is the Nucleophile of the active site. Cysteines 107 and 204 form a disulfide. G132 serves as a coordination point for ATP. The interaction with tRNA stretch occupies residues 154–156 (KDQ). C204 functions as the Cysteine persulfide intermediate in the catalytic mechanism. The tract at residues 316 to 317 (RY) is interaction with tRNA.

The protein belongs to the MnmA/TRMU family.

Its subcellular location is the cytoplasm. The catalysed reaction is S-sulfanyl-L-cysteinyl-[protein] + uridine(34) in tRNA + AH2 + ATP = 2-thiouridine(34) in tRNA + L-cysteinyl-[protein] + A + AMP + diphosphate + H(+). Functionally, catalyzes the 2-thiolation of uridine at the wobble position (U34) of tRNA, leading to the formation of s(2)U34. In Shewanella piezotolerans (strain WP3 / JCM 13877), this protein is tRNA-specific 2-thiouridylase MnmA.